A 302-amino-acid chain; its full sequence is Oxygen-dependent coproporphyrinogen-III oxidase (302 aa).

Serine 94 serves as a coordination point for substrate. A divalent metal cation-binding residues include histidine 98 and histidine 108. The active-site Proton donor is the histidine 108. Residue 110–112 (NVR) participates in substrate binding. Positions 147 and 177 each coordinate a divalent metal cation. Positions 242 to 277 (YVEFNLVYDRGTLFGLQTGGRTESILMSMPPLARWE) are important for dimerization. 260–262 (GGR) lines the substrate pocket.

Belongs to the aerobic coproporphyrinogen-III oxidase family. Homodimer. It depends on a divalent metal cation as a cofactor.

It is found in the cytoplasm. It carries out the reaction coproporphyrinogen III + O2 + 2 H(+) = protoporphyrinogen IX + 2 CO2 + 2 H2O. It functions in the pathway porphyrin-containing compound metabolism; protoporphyrin-IX biosynthesis; protoporphyrinogen-IX from coproporphyrinogen-III (O2 route): step 1/1. Its function is as follows. Involved in the heme biosynthesis. Catalyzes the aerobic oxidative decarboxylation of propionate groups of rings A and B of coproporphyrinogen-III to yield the vinyl groups in protoporphyrinogen-IX. This chain is Oxygen-dependent coproporphyrinogen-III oxidase, found in Aeromonas salmonicida (strain A449).